A 293-amino-acid chain; its full sequence is uncharacterized protein (293 aa).

Asp-119 is a catalytic residue.

This sequence belongs to the pseudouridine synthase RluA family.

The catalysed reaction is a uridine in RNA = a pseudouridine in RNA. This is an uncharacterized protein from Helicobacter pylori (strain J99 / ATCC 700824) (Campylobacter pylori J99).